The sequence spans 114 residues: T cell receptor alpha variable 24 (114 aa).

Residues 1–22 (MEKNPLAAPLLILWFHLDCVSS) form the signal peptide. In terms of domain architecture, Ig-like spans 23–114 (ILNVEQSPQS…EDSATYLCAF (92 aa)). Residue asparagine 42 is glycosylated (N-linked (GlcNAc...) asparagine). The cysteines at positions 45 and 112 are disulfide-linked.

As to quaternary structure, alpha-beta TR is a heterodimer composed of an alpha and beta chain; disulfide-linked. The alpha-beta TR is associated with the transmembrane signaling CD3 coreceptor proteins to form the TR-CD3 (TcR or TCR). The assembly of alpha-beta TR heterodimers with CD3 occurs in the endoplasmic reticulum where a single alpha-beta TR heterodimer associates with one CD3D-CD3E heterodimer, one CD3G-CD3E heterodimer and one CD247 homodimer forming a stable octameric structure. CD3D-CD3E and CD3G-CD3E heterodimers preferentially associate with TR alpha and TR beta chains, respectively. The association of the CD247 homodimer is the last step of TcR assembly in the endoplasmic reticulum and is required for transport to the cell surface.

The protein localises to the cell membrane. Functionally, v region of the variable domain of T cell receptor (TR) alpha chain that participates in the antigen recognition. Alpha-beta T cell receptors are antigen specific receptors which are essential to the immune response and are present on the cell surface of T lymphocytes. Recognize peptide-major histocompatibility (MH) (pMH) complexes that are displayed by antigen presenting cells (APC), a prerequisite for efficient T cell adaptive immunity against pathogens. Binding of alpha-beta TR to pMH complex initiates TR-CD3 clustering on the cell surface and intracellular activation of LCK that phosphorylates the ITAM motifs of CD3G, CD3D, CD3E and CD247 enabling the recruitment of ZAP70. In turn ZAP70 phosphorylates LAT, which recruits numerous signaling molecules to form the LAT signalosome. The LAT signalosome propagates signal branching to three major signaling pathways, the calcium, the mitogen-activated protein kinase (MAPK) kinase and the nuclear factor NF-kappa-B (NF-kB) pathways, leading to the mobilization of transcription factors that are critical for gene expression and essential for T cell growth and differentiation. The T cell repertoire is generated in the thymus, by V-(D)-J rearrangement. This repertoire is then shaped by intrathymic selection events to generate a peripheral T cell pool of self-MH restricted, non-autoaggressive T cells. Post-thymic interaction of alpha-beta TR with the pMH complexes shapes TR structural and functional avidity. The sequence is that of T cell receptor alpha variable 24 from Homo sapiens (Human).